The primary structure comprises 238 residues: Small ribosomal subunit protein eS4 (238 aa).

The region spanning 38 to 101 is the S4 RNA-binding domain; it reads LPLALIIRDV…GEVYRVVPDA (64 aa).

It belongs to the eukaryotic ribosomal protein eS4 family.

The sequence is that of Small ribosomal subunit protein eS4 from Pyrobaculum aerophilum (strain ATCC 51768 / DSM 7523 / JCM 9630 / CIP 104966 / NBRC 100827 / IM2).